The sequence spans 347 residues: Phenylalanine--tRNA ligase alpha subunit (347 aa).

Residue Glu261 coordinates Mg(2+).

It belongs to the class-II aminoacyl-tRNA synthetase family. Phe-tRNA synthetase alpha subunit type 1 subfamily. In terms of assembly, tetramer of two alpha and two beta subunits. Mg(2+) is required as a cofactor.

It is found in the cytoplasm. The catalysed reaction is tRNA(Phe) + L-phenylalanine + ATP = L-phenylalanyl-tRNA(Phe) + AMP + diphosphate + H(+). This is Phenylalanine--tRNA ligase alpha subunit from Streptococcus uberis (strain ATCC BAA-854 / 0140J).